Here is a 23-residue protein sequence, read N- to C-terminus: Dahlein-4.1 (23 aa).

In terms of tissue distribution, expressed by the skin dorsal glands.

The protein resides in the secreted. Functionally, has no antimicrobial activity. The sequence is that of Dahlein-4.1 from Ranoidea dahlii (Dahl's aquatic frog).